The primary structure comprises 334 residues: Fructose-1,6-bisphosphatase class 1 (334 aa).

4 residues coordinate Mg(2+): E91, D113, L115, and D116. Substrate contacts are provided by residues 116 to 119 (DGSS), N208, and K274. E280 contributes to the Mg(2+) binding site.

The protein belongs to the FBPase class 1 family. Homotetramer. Mg(2+) serves as cofactor.

The protein localises to the cytoplasm. The enzyme catalyses beta-D-fructose 1,6-bisphosphate + H2O = beta-D-fructose 6-phosphate + phosphate. It participates in carbohydrate biosynthesis; gluconeogenesis. The chain is Fructose-1,6-bisphosphatase class 1 from Herminiimonas arsenicoxydans.